The chain runs to 1837 residues: AF4/FMR2 family member lilli (1837 aa).

Disordered stretches follow at residues 1–25, 65–109, 162–295, 455–592, 605–712, 797–852, 868–1250, 1267–1311, and 1344–1466; these read MAQQ…QQQQ, NLYS…PRRL, IQQQ…LHNG, QQLP…KKKY, TGLL…PGNV, PKSQ…LQIP, NNMQ…GGAK, QQQQ…GLAS, and APSS…DPML. Residues 16 to 25 show a composition bias toward low complexity; that stretch reads HQQQQQQQQQ. Positions 84–109 are enriched in basic and acidic residues; that stretch reads REKYERQQGIQSDDRETSLFSEPRRL. 3 stretches are compositionally biased toward low complexity: residues 162-179, 187-200, and 247-264; these read IQQQ…VASS, QTQQ…QQQQ, and NSNS…SSSS. Position 468 is a phosphothreonine (Thr468). A compositionally biased stretch (basic and acidic residues) spans 475–488; sequence LKIEKNPILEKQDS. Positions 490–500 are enriched in acidic residues; the sequence is LENDLELSESE. Residues Ser497 and Ser499 each carry the phosphoserine modification. Composition is skewed to low complexity over residues 509–529 and 542–552; these read SPGS…SESS and QQQQQTQQQQL. Residues 553 to 563 show a composition bias toward basic residues; sequence HGHHPQSHHHQ. Positions 564-583 are enriched in low complexity; it reads QFLQQQLQRQQQQQQQQQQL. 2 stretches are compositionally biased toward gly residues: residues 612-633 and 641-673; these read GGLG…GNGG and GSMG…GIGS. Composition is skewed to polar residues over residues 678–690 and 698–711; these read NKTP…NKWN and PTSQ…SPGN. Residues 815-837 are compositionally biased toward low complexity; it reads SESATSGSSSSSCSSSDSAASAS. Polar residues predominate over residues 868–880; it reads NNMQKSQSMSVTV. Positions 892–902 are enriched in basic residues; that stretch reads PRQKKPRKKKM. Residues Ser913 and Ser914 each carry the phosphoserine modification. Low complexity-rich tracts occupy residues 927 to 951 and 961 to 1013; these read VVAQ…ATTT and QQQQ…SSVL. Positions 952–964 form a DNA-binding region, a.T hook; the sequence is KKGRGRPRKQQQQ. Ser974 and Ser976 each carry phosphoserine. Polar residues predominate over residues 1021 to 1033; it reads SQSSSNGNTPTKK. Low complexity-rich tracts occupy residues 1034 to 1049, 1056 to 1091, 1130 to 1139, and 1157 to 1173; these read MSSI…SAAA, AVAA…SSSS, GSSSPTSSSS, and ISNS…VNNN. Residues 1174–1184 show a composition bias toward polar residues; sequence LQQQAMPQQSP. Residues 1189–1212 show a composition bias toward low complexity; that stretch reads LSGGSQQLSSSDSSSSSSGSSSSS. The span at 1217–1234 shows a compositional bias: basic and acidic residues; it reads DAKREKNRERKPKSDKNK. A compositionally biased stretch (low complexity) spans 1267–1276; the sequence is QQQQQQQQVQ. A compositionally biased stretch (polar residues) spans 1345-1355; the sequence is PSSSNQQNGHL. Positions 1373 to 1386 are enriched in basic residues; sequence KVKHEHHQLHHHSQ. Composition is skewed to basic and acidic residues over residues 1393 to 1407 and 1416 to 1432; these read VKPE…ETKF and FQLK…ERDQ. Ser1517 bears the Phosphoserine mark. The segment covering 1550-1560 has biased composition (polar residues); that stretch reads AVQTTPPTSVT. 2 disordered regions span residues 1550 to 1571 and 1727 to 1756; these read AVQT…LVSQ and GNTP…IVPQ. Low complexity predominate over residues 1727-1747; the sequence is GNTPSSISPSNSVGSQGSGSN.

The protein belongs to the AF4 family.

It localises to the nucleus. Functionally, has a role in transcriptional regulation. Acts in parallel with the Ras/MAPK and the PI3K/PKB pathways in the control of cell identity and cellular growth. Essential for regulation of the cytoskeleton and cell growth but not for cell proliferation or growth rate. Required specifically for the microtubule-based basal transport of lipid droplets. Plays a partially redundant function downstream of Raf in cell fate specification in the developing eye. Pair-rule protein that regulates embryonic cellularization, gastrulation and segmentation. The protein is AF4/FMR2 family member lilli of Drosophila willistoni (Fruit fly).